The following is a 266-amino-acid chain: Beta-lactamase OXA-19 (266 aa).

Positions 1 to 20 are cleaved as a signal peptide; the sequence is MKTFAAYVITACLSSTALAS. Residue Ser67 is the Acyl-ester intermediate of the active site. Lys70 is subject to N6-carboxylysine. 205 to 207 contacts substrate; that stretch reads KTG.

This sequence belongs to the class-D beta-lactamase family.

The enzyme catalyses a beta-lactam + H2O = a substituted beta-amino acid. The polypeptide is Beta-lactamase OXA-19 (bla) (Pseudomonas aeruginosa).